Here is a 342-residue protein sequence, read N- to C-terminus: NADH-quinone oxidoreductase subunit H (342 aa).

Transmembrane regions (helical) follow at residues 15 to 35 (LLII…LMVA), 86 to 106 (VLFI…WAVV), 119 to 139 (VGVL…IIAG), 159 to 179 (VSYE…VGSL), 190 to 210 (HVWF…SGLA), 251 to 271 (FMIC…PFDI), 277 to 297 (VPGP…FFWV), and 316 to 336 (VFLP…ELAG).

Belongs to the complex I subunit 1 family. NDH-1 is composed of 14 different subunits. Subunits NuoA, H, J, K, L, M, N constitute the membrane sector of the complex.

It localises to the cell inner membrane. The catalysed reaction is a quinone + NADH + 5 H(+)(in) = a quinol + NAD(+) + 4 H(+)(out). NDH-1 shuttles electrons from NADH, via FMN and iron-sulfur (Fe-S) centers, to quinones in the respiratory chain. The immediate electron acceptor for the enzyme in this species is believed to be ubiquinone. Couples the redox reaction to proton translocation (for every two electrons transferred, four hydrogen ions are translocated across the cytoplasmic membrane), and thus conserves the redox energy in a proton gradient. This subunit may bind ubiquinone. This is NADH-quinone oxidoreductase subunit H from Granulibacter bethesdensis (strain ATCC BAA-1260 / CGDNIH1).